The chain runs to 253 residues: MKKKILEVTNLHAAVNEIKIVKGLNLVVNAGEIHAIMGKNGSGKSTFAKIIAGHPDYTITNGDITYQHTSILELTPEDRAKRGIFLSFQYPIEIPGVTNADFLRLACNARRIYQGLPEMEPLEFFEYINSKLPLVDLKPSFLTRDVNEGFSGGEKKRNEILQMSILDTKLAVLDETDSGLDIDALRTVANGIKSLANDGNAIILITHYQRLLDYIKPDFVHVMQEGKIIKTGSASLALDLEKYGYDWLKNELK.

The region spanning 6–250 is the ABC transporter domain; it reads LEVTNLHAAV…EKYGYDWLKN (245 aa). 38 to 45 contacts ATP; the sequence is GKNGSGKS.

This sequence belongs to the ABC transporter superfamily. Ycf16 family.

The protein resides in the plastid. The protein localises to the chloroplast. This chain is Probable ATP-dependent transporter ycf16 (ycf16), found in Guillardia theta (Cryptophyte).